The chain runs to 243 residues: Vimentin A2 (243 aa).

The segment at 1–22 is coil 1B; that stretch reads GFSLQDELDFLKKLHDEELADV. The IF rod domain occupies 1-188; it reads GFSLQDELDF…KLLEGEESRI (188 aa). Residues 23–45 form a linker 12 region; the sequence is QAQIQDQQVQVDMDMAKPDLTAA. Residues 46–184 are coil 2; it reads LRDVRLQYEN…ATYRKLLEGE (139 aa). The tract at residues 185-243 is tail; it reads ESRITTPLPNLSSFNLRDAILETKPILENTFSKKVLIKTIETRDGEVINESTQNHDDLE.

It belongs to the intermediate filament family. In terms of assembly, homomer. One of the most prominent phosphoproteins in various cells of mesenchymal origin. Phosphorylation is enhanced during cell division, at which time vimentin filaments are significantly reorganized. Expressed in low amounts in retina, optic nerve, and brain and in higher amounts in spinal cord.

Vimentins are class-III intermediate filaments found in various non-epithelial cells, especially mesenchymal cells. Vimentin is attached to the nucleus, endoplasmic reticulum, and mitochondria, either laterally or terminally. The polypeptide is Vimentin A2 (Carassius auratus (Goldfish)).